The primary structure comprises 148 residues: Ubiquitin-conjugating enzyme E2 10 (148 aa).

Residues 1–147 (MASKRILKEL…ARSWTQKYAM (147 aa)) form the UBC core domain. Cys-85 acts as the Glycyl thioester intermediate in catalysis.

The protein belongs to the ubiquitin-conjugating enzyme family. In terms of assembly, interacts with CHIP and the E3 ubiquitin ligase BB. Associates with the E3 ubiquitin ligase JMJ24. As to expression, ubiquitously expressed with the highest levels in rosette leaves, roots and petals.

It catalyses the reaction S-ubiquitinyl-[E1 ubiquitin-activating enzyme]-L-cysteine + [E2 ubiquitin-conjugating enzyme]-L-cysteine = [E1 ubiquitin-activating enzyme]-L-cysteine + S-ubiquitinyl-[E2 ubiquitin-conjugating enzyme]-L-cysteine.. Its pathway is protein modification; protein ubiquitination. Its function is as follows. Accepts the ubiquitin from the E1 complex and catalyzes its covalent attachment to other proteins. Mediates the selective degradation of short-lived and abnormal proteins. This Arabidopsis thaliana (Mouse-ear cress) protein is Ubiquitin-conjugating enzyme E2 10.